We begin with the raw amino-acid sequence, 627 residues long: 1-deoxy-D-xylulose-5-phosphate synthase (627 aa).

Residues H80 and G121–S123 contribute to the thiamine diphosphate site. D152 provides a ligand contact to Mg(2+). Thiamine diphosphate is bound by residues G153 to A154, N181, Y288, and E370. Mg(2+) is bound at residue N181.

It belongs to the transketolase family. DXPS subfamily. As to quaternary structure, homodimer. The cofactor is Mg(2+). It depends on thiamine diphosphate as a cofactor.

The enzyme catalyses D-glyceraldehyde 3-phosphate + pyruvate + H(+) = 1-deoxy-D-xylulose 5-phosphate + CO2. Its pathway is metabolic intermediate biosynthesis; 1-deoxy-D-xylulose 5-phosphate biosynthesis; 1-deoxy-D-xylulose 5-phosphate from D-glyceraldehyde 3-phosphate and pyruvate: step 1/1. Its function is as follows. Catalyzes the acyloin condensation reaction between C atoms 2 and 3 of pyruvate and glyceraldehyde 3-phosphate to yield 1-deoxy-D-xylulose-5-phosphate (DXP). In Vibrio atlanticus (strain LGP32) (Vibrio splendidus (strain Mel32)), this protein is 1-deoxy-D-xylulose-5-phosphate synthase.